Consider the following 376-residue polypeptide: MAYTTFSQTKNDQLKEPMFFGQPVNVARYDQQKYDIFEKLIEKQLSFFWRPEEVDVSRDRIDYQALPEHEKHIFISNLKYQTLLDSIQGRSPNVALLPLISIPELETWVETWAFSETIHSRSYTHIIRNIVNDPAVVFDDIVTNEQIQKRAEGISAYYDELIEMTSYWHLLGEGTHTVNGKTVVVNLRELKKKLYLCLMSVNALEAIRFYVSFACSFAFAERELMEGNAKIIRLIARDEALHLTGTQHMLNLLRSGVDDPEMAEIAEECKQECYDLFVQAAQQEKEWADYLFRDGSMIGLNKDILCQYVEYITNIRMQAVGLDLPFQTRSNPIPWINTWLVSDNVQVAPQEVEVSSYLVGQIDSEVDTDDLSNFQL.

Residues Asp85, Glu116, and His119 each contribute to the Fe cation site. Residue Tyr123 is part of the active site. Residues Glu205, Glu239, and His242 each contribute to the Fe cation site.

This sequence belongs to the ribonucleoside diphosphate reductase small chain family. Tetramer of two alpha (R1) and two beta (R2) subunits. The B1 protein is a dimer of alpha subunits. A radical transfer pathway occurs between Tyr-123 of R2 and R1. The cofactor is Fe cation.

It carries out the reaction a 2'-deoxyribonucleoside 5'-diphosphate + [thioredoxin]-disulfide + H2O = a ribonucleoside 5'-diphosphate + [thioredoxin]-dithiol. Functionally, provides the precursors necessary for DNA synthesis. Catalyzes the biosynthesis of deoxyribonucleotides from the corresponding ribonucleotides. R2 contains the tyrosyl radical required for catalysis. This chain is Ribonucleoside-diphosphate reductase 1 subunit beta (nrdB), found in Salmonella typhimurium (strain LT2 / SGSC1412 / ATCC 700720).